The sequence spans 105 residues: Large ribosomal subunit protein eL36 (105 aa).

Position 62 is an N6-acetyllysine (Lys62).

Belongs to the eukaryotic ribosomal protein eL36 family. As to quaternary structure, component of the large ribosomal subunit.

It localises to the cytoplasm. The protein resides in the cytosol. Functionally, component of the large ribosomal subunit. The ribosome is a large ribonucleoprotein complex responsible for the synthesis of proteins in the cell. The polypeptide is Large ribosomal subunit protein eL36 (RPL36) (Homo sapiens (Human)).